We begin with the raw amino-acid sequence, 801 residues long: Interleukin-4 receptor subunit alpha (801 aa).

An N-terminal signal peptide occupies residues 1-25 (MGWLCTKFLSSVSCLILLWVTGSGG). Over 26-232 (IKVLGDPTCF…NHFQLPLLQR (207 aa)) the chain is Extracellular. Cysteines 34 and 44 form a disulfide. The N-linked (GlcNAc...) asparagine glycan is linked to N71. A disulfide bond links C74 and C86. The region spanning 125 to 223 (APDNLTLHTN…EWSPSITWYN (99 aa)) is the Fibronectin type-III domain. 3 N-linked (GlcNAc...) asparagine glycosylation sites follow: N128, N134, and N162. S164 bears the Phosphoserine mark. N176 is a glycosylation site (N-linked (GlcNAc...) asparagine). A WSXWS motif motif is present at residues 212–216 (WSEWS). The helical transmembrane segment at 233 to 256 (LPLGVSISCICILLFCLTCYFSII) threads the bilayer. Topologically, residues 257–801 (KIKKIWWDQI…PVGTLGVTVS (545 aa)) are cytoplasmic. The short motif at 262–270 (WWDQIPTPA) is the Box 1 motif element. Residues 424-476 (VGQSSMAESSSLLPSESGQASTSWACFPTGPSETTCQVTGQQPPHPDPERATG) form a disordered region. Low complexity predominate over residues 426-444 (QSSMAESSSLLPSESGQAS). The interval 439–549 (ESGQASTSWA…ESWEQILHMS (111 aa)) is required for IRS1 activation and IL4-induced cell growth. Positions 454-465 (PSETTCQVTGQQ) are enriched in polar residues. A Phosphotyrosine modification is found at Y492. The tract at residues 493-515 (RSFSDFSSPAPNPGELASEQKQA) is disordered. A required for IL4-induced gene expression region spans residues 549-644 (SVLQHGTAGS…NSMPLFTFGL (96 aa)). 3 positions are modified to phosphotyrosine: Y566, Y594, and Y622. Positions 698-703 (IVYSSL) match the ITIM motif motif. A disordered region spans residues 767-801 (RTPSNLSGVGKGPGHSPVPSQTTEVPVGTLGVTVS).

The protein belongs to the type I cytokine receptor family. Type 4 subfamily. In terms of assembly, the functional IL4 receptor is formed by initial binding of IL4 to IL4R. Subsequent recruitment to the complex of the common gamma chain, in immune cells, creates a type I receptor and, in non-immune cells, of IL13RA1 forms a type II receptor. IL4R can also interact with the IL13/IL13RA1 complex to form a similar type II receptor. Interacts with PIK3C3. Interacts with the SH2-containing phosphatases, PTPN6/SHIP1, PTPN11/SHIP2 and INPP5D/SHIP. Interacts with JAK1 through a Box 1-containing region; inhibited by SOCS5. Interacts with SOCS5; inhibits IL4 signaling. Interacts with JAK3. Interacts with CLM1. Interacts with IL13RA2. On IL4 binding, phosphorylated on C-terminal tyrosine residues. As to expression, isoform 2 is expressed in kidney, spleen, lung and liver.

The protein localises to the cell membrane. It is found in the secreted. In terms of biological role, receptor for both interleukin 4 and interleukin 13. Couples to the JAK1/2/3-STAT6 pathway. The IL4 response is involved in promoting Th2 differentiation. The IL4/IL13 responses are involved in regulating IgE production and, chemokine and mucus production at sites of allergic inflammation. In certain cell types, can signal through activation of insulin receptor substrates, IRS1/IRS2. Functionally, isoform 2 (soluble form) inhibits IL4-induced spleen cell proliferation. This chain is Interleukin-4 receptor subunit alpha (Il4r), found in Rattus norvegicus (Rat).